Consider the following 102-residue polypeptide: Small ribosomal subunit protein uS10 (102 aa).

Belongs to the universal ribosomal protein uS10 family. Part of the 30S ribosomal subunit.

Involved in the binding of tRNA to the ribosomes. The chain is Small ribosomal subunit protein uS10 from Paracoccus denitrificans (strain Pd 1222).